A 268-amino-acid polypeptide reads, in one-letter code: Probable 6-phosphogluconolactonase 1 (268 aa).

It belongs to the glucosamine/galactosamine-6-phosphate isomerase family. 6-phosphogluconolactonase subfamily.

It localises to the cytoplasm. The protein localises to the cytosol. The catalysed reaction is 6-phospho-D-glucono-1,5-lactone + H2O = 6-phospho-D-gluconate + H(+). The protein operates within carbohydrate degradation; pentose phosphate pathway; D-ribulose 5-phosphate from D-glucose 6-phosphate (oxidative stage): step 2/3. Catalyzes the hydrolysis of 6-phosphogluconolactone to 6-phosphogluconate. This is Probable 6-phosphogluconolactonase 1 from Arabidopsis thaliana (Mouse-ear cress).